We begin with the raw amino-acid sequence, 309 residues long: Thioredoxin reductase (309 aa).

35–42 (EKQFPGGK) contacts FAD. A disulfide bridge links cysteine 134 with cysteine 137. FAD is bound at residue 277–286 (DIVDKNVRQI).

It belongs to the class-II pyridine nucleotide-disulfide oxidoreductase family. In terms of assembly, homodimer. It depends on FAD as a cofactor.

The protein resides in the cytoplasm. It carries out the reaction [thioredoxin]-dithiol + NADP(+) = [thioredoxin]-disulfide + NADPH + H(+). The sequence is that of Thioredoxin reductase (trxB) from Ureaplasma parvum serovar 3 (strain ATCC 700970).